We begin with the raw amino-acid sequence, 577 residues long: External alternative NAD(P)H-ubiquinone oxidoreductase B1, mitochondrial (577 aa).

A mitochondrion-targeting transit peptide spans 1-35 (MRGFTYLSKVLHSHSSYSKLLVLCSVSTGGLLVYA). Residue 57–87 (RVVVLGTGWGGTSFLKDVDISSYDVQVVSPR) coordinates FAD. Residue 221–257 (LHFVIVGGGPTGVEFAAELHDYVYEDLVKIYPSVKDF) participates in NAD(+) binding. The EF-hand domain occupies 378-413 (KVMEDISTIFEAADKDDSGTLSVEEFRDVLEDIIIR). Asp-391, Asp-393, Ser-395, Thr-397, and Glu-402 together coordinate Ca(2+). The Microbody targeting signal signature appears at 568–577 (YIFGRDSSRI).

The protein belongs to the NADH dehydrogenase family. FAD serves as cofactor.

The protein resides in the mitochondrion inner membrane. It is found in the peroxisome. The catalysed reaction is a quinone + NADH + H(+) = a quinol + NAD(+). The enzyme catalyses a ubiquinone + NADH + H(+) = a ubiquinol + NAD(+). Activity is calcium-dependent with a more pronounced effect at higher pH. Calcium-dependent NAD(P)H dehydrogenase. Binds calcium ions. Alternative NADH-ubiquinone oxidoreductase which catalyzes the oxidation of mitochondrial NADH does not translocate protons across the inner mitochondrial membrane. In Solanum tuberosum (Potato), this protein is External alternative NAD(P)H-ubiquinone oxidoreductase B1, mitochondrial (NDB1).